Reading from the N-terminus, the 433-residue chain is Steroid hormone receptor ERR2 (433 aa).

The segment at methionine 1 to serine 38 is disordered. Low complexity predominate over residues aspartate 28–serine 38. The interaction with NANOG stretch occupies residues tyrosine 93–lysine 211. The nuclear receptor DNA-binding region spans lysine 100 to lysine 186. 2 NR C4-type zinc fingers span residues cysteine 103–cysteine 123 and cysteine 139–cysteine 163. The segment at proline 203–valine 433 is essential for ESRRB transcriptional activity and interaction with NCOA3. Residues proline 208–lysine 432 enclose the NR LBD domain.

Belongs to the nuclear hormone receptor family. NR3 subfamily. In terms of assembly, binds DNA as a monomer. Interacts with NR0B1; represses ESRRB activity at the GATA6 promoter. Interacts with NANOG; reciprocally modulates their transcriptional activities and activates POU5F1 expression. Interacts with NCOA3; mediates the interaction between ESRRB and RNA polymerase II complexes and allows NCOA3 corecruitment to ESRRB, KLF4, NANOG, and SOX2 enhancer regions to trigger ESRRB-dependent gene activation involved in self-renewal and pluripotency. Interacts with KDM1A; co-occupes the core set of ESRRB targets including ELF5 and EOMES. Interacts with the multiprotein complex Integrator, at least composed of INTS1, INTS2, INTS3, INTS4, INTS5, INTS6, INTS7, INTS8, INTS9/RC74, INTS10, INTS11/CPSF3L and INTS12; ESRRB is probably not a core component of the integrator complex and associates to integrator via its interaction with INTS1 and INTS9; attracts the transcriptional machinery. Interacts with JARID2. Interacts with POU5F1; recruits ESRRB near the POU5F1-SOX2 element in the NANOG proximal promoter leading to activation of NANOG expression; the interaction is DNA independent. Interacts with NFE2L2; represses NFE2L2 transcriptional activity. Isoform 1 interacts with ESR1. Acetylated by PCAF/KAT2 (in vitro).

It is found in the nucleus. The protein resides in the cytoplasm. It localises to the chromosome. Functionally, transcription factor that binds a canonical ESRRB recognition (ERRE) sequence 5'TCAAGGTCA-3' localized on promoter and enhancer of targets genes regulating their expression or their transcription activity. Plays a role, in a LIF-independent manner, in maintainance of self-renewal and pluripotency of embryonic and trophoblast stem cells through different signaling pathways including FGF signaling pathway and Wnt signaling pathways. Involved in morula development (2-16 cells embryos) by acting as a regulator at the 8-cell stage. Upon FGF signaling pathway activation, interacts with KDM1A by directly binding to enhancer site of ELF5 and EOMES and activating their transcription leading to self-renewal of trophoblast stem cells. Also regulates expression of multiple rod-specific genes and is required for survival of this cell type. Plays a role as transcription factor activator of GATA6, NR0B1, POU5F1 and PERM1. Plays a role as transcription factor repressor of NFE2L2 transcriptional activity and ESR1 transcriptional activity. During mitosis remains bound to a subset of interphase target genes, including pluripotency regulators, through the canonical ESRRB recognition (ERRE) sequence, leading to their transcriptional activation in early G1 phase. Can coassemble on structured DNA elements with other transcription factors like SOX2, POU5F1, KDM1A and NCOA3 to trigger ESRRB-dependent gene activation. This mechanism, in the case of SOX2 corecruitment prevents the embryonic stem cells (ESCs) to epiblast stem cells (EpiSC) transition through positive regulation of NR0B1 that inhibits the EpiSC transcriptional program. Also plays a role inner ear development by controlling expression of ion channels and transporters and in early placentation. In terms of biological role, transcription factor that binds a canonical ESRRB recognition (ERRE) sequence 5'TCAAGGTCA-3' localized on promoter and enhancer of targets genes regulating their expression or their transcription activity. Positively regulates ESR1 transcriptional activity upon E2 stimulation. The polypeptide is Steroid hormone receptor ERR2 (Homo sapiens (Human)).